Reading from the N-terminus, the 25-residue chain is Zinc metalloproteinase-disintegrin-like daborhagin-M (25 aa).

One can recognise a Peptidase M12B domain in the interval 14-25; that stretch reads SYVELIITVDHS. A Ca(2+)-binding site is contributed by Glu-17.

This sequence belongs to the venom metalloproteinase (M12B) family. P-III subfamily. P-IIIa sub-subfamily. As to quaternary structure, monomer. Zn(2+) serves as cofactor. In terms of processing, N-glycosylated. Contains 16 disulfide bonds. As to expression, expressed by the venom gland.

Its subcellular location is the secreted. Inhibited by EDTA, EGTA and 1,10-phenanthroline. Addition of Mg(2+) or Ca(2+) increases the casein hydrolysis rate. In terms of biological role, snake venom zinc metalloprotease that possesses high hemorrhagic activity (minimum hemorrhagic dose, MHD=0.86 ug) when subcutaneously injected into mice. Has potent fibrinogenolytic activity on alpha-chain of fibrinogen (FGA). Hydrolyzes model substrate (beta-chain of insulin) at Ala(14)-Leu(15) and Tyr(16)-Leu(17) followed by His(10)-Leu(11) and Phe(24)-Phe(25). This is Zinc metalloproteinase-disintegrin-like daborhagin-M from Daboia siamensis (Eastern Russel's viper).